The primary structure comprises 233 residues: Large ribosomal subunit protein uL1 (233 aa).

It belongs to the universal ribosomal protein uL1 family. As to quaternary structure, part of the 50S ribosomal subunit.

In terms of biological role, binds directly to 23S rRNA. The L1 stalk is quite mobile in the ribosome, and is involved in E site tRNA release. Functionally, protein L1 is also a translational repressor protein, it controls the translation of the L11 operon by binding to its mRNA. This Photorhabdus laumondii subsp. laumondii (strain DSM 15139 / CIP 105565 / TT01) (Photorhabdus luminescens subsp. laumondii) protein is Large ribosomal subunit protein uL1.